The sequence spans 490 residues: GTPase Der (490 aa).

EngA-type G domains lie at P3–V166 and I203–T376. Residues G9–S16, D56–I60, N118–D121, G209–S216, D256–V260, and N321–D324 contribute to the GTP site. A KH-like domain is found at R377–E461.

The protein belongs to the TRAFAC class TrmE-Era-EngA-EngB-Septin-like GTPase superfamily. EngA (Der) GTPase family. As to quaternary structure, associates with the 50S ribosomal subunit.

Its function is as follows. GTPase that plays an essential role in the late steps of ribosome biogenesis. This chain is GTPase Der, found in Salmonella gallinarum (strain 287/91 / NCTC 13346).